The primary structure comprises 87 residues: uncharacterized protein (87 aa).

Residues 21–41 (LSSSLYSVAFFLFFFPNFLFF) form a helical membrane-spanning segment.

Its subcellular location is the membrane. This is an uncharacterized protein from Saccharomyces cerevisiae (strain ATCC 204508 / S288c) (Baker's yeast).